The sequence spans 421 residues: Enolase (421 aa).

Gln162 is a (2R)-2-phosphoglycerate binding site. Residue Glu204 is the Proton donor of the active site. Mg(2+)-binding residues include Asp241, Glu284, and Asp311. (2R)-2-phosphoglycerate contacts are provided by Lys336, Arg365, Ser366, and Lys387. Lys336 (proton acceptor) is an active-site residue.

Belongs to the enolase family. Requires Mg(2+) as cofactor.

The protein localises to the cytoplasm. It localises to the secreted. It is found in the cell surface. It catalyses the reaction (2R)-2-phosphoglycerate = phosphoenolpyruvate + H2O. It participates in carbohydrate degradation; glycolysis; pyruvate from D-glyceraldehyde 3-phosphate: step 4/5. Functionally, catalyzes the reversible conversion of 2-phosphoglycerate (2-PG) into phosphoenolpyruvate (PEP). It is essential for the degradation of carbohydrates via glycolysis. The sequence is that of Enolase from Nautilia profundicola (strain ATCC BAA-1463 / DSM 18972 / AmH).